Consider the following 500-residue polypeptide: Allene oxide synthase 3 (500 aa).

Positions 1 to 26 are disordered; the sequence is MAPPPVNSGDAAAAATGEKSKLSPSG. Residues 297–298, K304, and 365–368 contribute to the substrate site; these read FN and PVEF. C452 serves as a coordination point for heme.

This sequence belongs to the cytochrome P450 family. Heme is required as a cofactor. In terms of tissue distribution, not expressed in dark-grown seedlings.

It carries out the reaction (13S)-hydroperoxy-(9Z,11E,15Z)-octadecatrienoate = (9Z,13S,15Z)-12,13-epoxyoctadeca-9,11,15-trienoate + H2O. The protein operates within lipid metabolism; oxylipin biosynthesis. Its function is as follows. Involved in the biosynthesis of jasmonic acid, a growth regulator that is implicated also as a signaling molecule in plant defense. Converts 13-hydroperoxylinolenic acid to 12,13-epoxylinolenic acid. The sequence is that of Allene oxide synthase 3 (CYP74A3) from Oryza sativa subsp. japonica (Rice).